The following is a 252-amino-acid chain: Transcriptional regulatory protein HptR (252 aa).

Residues 3–118 (KVVICDDERI…QLEVILGRLV (116 aa)) enclose the Response regulatory domain. Asp-55 is subject to 4-aspartylphosphate. The 98-residue stretch at 153-250 (NQIVDQIKQS…QMSPSDYCKQ (98 aa)) folds into the HTH araC/xylS-type domain. 2 DNA-binding regions (H-T-H motif) span residues 170–191 (SDLI…KDHV) and 217–240 (HYEI…KKYL).

Post-translationally, phosphorylated by HptS.

Its subcellular location is the cytoplasm. In terms of biological role, member of the two-component regulatory system HptS/HptR that regulates genes involved in hexose phosphate transport system in response to changes in extracellular phosphate sources. Activates uhpT expression to facilitate glucose-6-phosphate/G6P utilization by directly binding to its promoter. Antagonizes CcpA-dependent transcription of a subset of CcpA-regulated genes involved in antibiotic susceptibility. The sequence is that of Transcriptional regulatory protein HptR (hptR) from Staphylococcus aureus (strain NCTC 8325 / PS 47).